The primary structure comprises 119 residues: Ribosome-binding factor A (119 aa).

Belongs to the RbfA family. As to quaternary structure, monomer. Binds 30S ribosomal subunits, but not 50S ribosomal subunits or 70S ribosomes.

Its subcellular location is the cytoplasm. Functionally, one of several proteins that assist in the late maturation steps of the functional core of the 30S ribosomal subunit. Associates with free 30S ribosomal subunits (but not with 30S subunits that are part of 70S ribosomes or polysomes). Required for efficient processing of 16S rRNA. May interact with the 5'-terminal helix region of 16S rRNA. This Chlorobium phaeovibrioides (strain DSM 265 / 1930) (Prosthecochloris vibrioformis (strain DSM 265)) protein is Ribosome-binding factor A.